Consider the following 647-residue polypeptide: Threonine--tRNA ligase (647 aa).

Residues Met1–Thr61 form the TGS domain. Residues Asp242–Pro540 form a catalytic region. Residues Cys336, His387, and His517 each contribute to the Zn(2+) site.

This sequence belongs to the class-II aminoacyl-tRNA synthetase family. In terms of assembly, homodimer. Zn(2+) is required as a cofactor.

Its subcellular location is the cytoplasm. The enzyme catalyses tRNA(Thr) + L-threonine + ATP = L-threonyl-tRNA(Thr) + AMP + diphosphate + H(+). In terms of biological role, catalyzes the attachment of threonine to tRNA(Thr) in a two-step reaction: L-threonine is first activated by ATP to form Thr-AMP and then transferred to the acceptor end of tRNA(Thr). Also edits incorrectly charged L-seryl-tRNA(Thr). In Streptococcus sanguinis (strain SK36), this protein is Threonine--tRNA ligase.